Here is a 461-residue protein sequence, read N- to C-terminus: Protein-serine O-palmitoleoyltransferase porcupine (461 aa).

The Cytoplasmic portion of the chain corresponds to 1 to 17; sequence MATFSRQEFFQQLLQGC. The helical transmembrane segment at 18–38 threads the bilayer; that stretch reads LLPTVQQGLDQIWLLLTICFA. The Extracellular segment spans residues 39 to 66; that stretch reads CRLLWRLGLPSYLKHASTVAGGFFSLYH. The chain crosses the membrane as a helical span at residues 67–87; the sequence is FFQLHMVWVVLLSLLCYLVLF. The Cytoplasmic segment spans residues 88–95; it reads LCRHSSHR. The chain crosses the membrane as a helical span at residues 96–116; that stretch reads GVFLSVTILIYLLMGEMHMVD. The Extracellular segment spans residues 117–152; sequence TVTWHKMRGAQMIVAMKAVSLGFDLDRGEVGAVPSP. The helical transmembrane segment at 153 to 173 threads the bilayer; the sequence is VEFMGYLYFVGTIVFGPWISF. Residues 174–198 lie on the Cytoplasmic side of the membrane; that stretch reads HSYLQAVQGRPLSRRWLKKVARSLA. Residues 199-219 traverse the membrane as a helical segment; sequence LALLCLVLSTCVGPYLFPYFI. The Extracellular segment spans residues 220-252; the sequence is PLDGDRLLRNKKRKARGTMVRWLRAYESAVSFH. The helical transmembrane segment at 253–273 threads the bilayer; that stretch reads FSNYFVGFLSEATATLAGAGF. Over 274-337 the chain is Cytoplasmic; it reads TEEKDHLEWD…SAVLVTYAAS (64 aa). A helical membrane pass occupies residues 338 to 358; it reads ALLHGFSFHLAAVLLSLAFIT. Residue His-341 is part of the active site. Residues 359–396 lie on the Extracellular side of the membrane; that stretch reads YVEHVLRKRLAQILSACILSKRCLPDCSHRHRLGLGVR. A helical membrane pass occupies residues 397-417; the sequence is ALNLLFGALAIFHLSYLGSLF. Residues 418–461 lie on the Cytoplasmic side of the membrane; it reads DVDVDDTTEEQGYGMAYTVHKWSELSWASHWVTFGCWIFYRLIG.

Belongs to the membrane-bound acyltransferase family. Porcupine subfamily. In terms of assembly, interacts with WNT1, WNT3, WNT3A, WNT4, WNT5A, WNT5B, WNT6, WNT7A and WNT7B. As to expression, expressed in brain, heart, kidney, liver, lung, muscle, spleen and testis. Isoform 4 is strongly expressed in kidney, liver, lung, spleen and testis. Isoform 1 is strongly expressed in brain, heart and muscle and poorly in kidney, liver, lung, spleen and testis.

It localises to the endoplasmic reticulum membrane. It catalyses the reaction [Wnt protein]-L-serine + (9Z)-hexadecenoyl-CoA = [Wnt protein]-O-(9Z)-hexadecenoyl-L-serine + CoA. Functionally, protein-serine O-palmitoleoyltransferase that acts as a key regulator of the Wnt signaling pathway by mediating the attachment of palmitoleate, a 16-carbon monounsaturated fatty acid (C16:1(9Z)), to Wnt proteins. Serine palmitoleoylation of WNT proteins is required for efficient binding to frizzled receptors. The chain is Protein-serine O-palmitoleoyltransferase porcupine from Mus musculus (Mouse).